Reading from the N-terminus, the 431-residue chain is Glutamyl-tRNA(Gln) amidotransferase subunit A (431 aa).

Active-site charge relay system residues include Lys-55 and Ser-130. Catalysis depends on Ser-154, which acts as the Acyl-ester intermediate.

It belongs to the amidase family. GatA subfamily. In terms of assembly, heterotrimer of A, B and C subunits.

It catalyses the reaction L-glutamyl-tRNA(Gln) + L-glutamine + ATP + H2O = L-glutaminyl-tRNA(Gln) + L-glutamate + ADP + phosphate + H(+). In terms of biological role, allows the formation of correctly charged Gln-tRNA(Gln) through the transamidation of misacylated Glu-tRNA(Gln) in organisms which lack glutaminyl-tRNA synthetase. The reaction takes place in the presence of glutamine and ATP through an activated gamma-phospho-Glu-tRNA(Gln). The chain is Glutamyl-tRNA(Gln) amidotransferase subunit A from Methanococcus maripaludis (strain C6 / ATCC BAA-1332).